Reading from the N-terminus, the 504-residue chain is MFGDRQRPMVLVLGLGESGLAIARWCARHGCRLRVADTRETPPNLAALTAAGVDFEFVGGAFSPALVDGGIELVALSPGLSPLAEDLAPLVAAARERGIPVWGELEFFAQALAALGANGYAPKVIAITGTNGKTTTTSLAGLLCERAGKKVAVAGNISPAMLDKLTEAIDAAALPDVWVLELSSFQLDTAHTFAPDAATILNITQDHLDWHGGFAAYAAAKGRVFGPRTVRVLNRDDAEVMRFAPPAAAADAPRAVTFGLNEPAADGDYGLLRENGIAWLVEAIDRDAADAPAAPSRRRKQEAANPPDIALKRLMPADALRIRGLHNAANALAAYALARAIGLPAAPLLHGLREYRGEPHRVEVIATLDGVDYVDDSKGTNVGATVAALDGLAQRAVLIAGGDGKGQDFEPLAAPVARWCRAVMLIGRDAPALREALADTGVPLADHATLEAAVRAASALAQPGDAVLLSPACASLDMFRNYAHRADVFRSAVEDIALEKGTTL.

129–135 provides a ligand contact to ATP; it reads GTNGKTT.

This sequence belongs to the MurCDEF family.

The protein localises to the cytoplasm. The enzyme catalyses UDP-N-acetyl-alpha-D-muramoyl-L-alanine + D-glutamate + ATP = UDP-N-acetyl-alpha-D-muramoyl-L-alanyl-D-glutamate + ADP + phosphate + H(+). The protein operates within cell wall biogenesis; peptidoglycan biosynthesis. In terms of biological role, cell wall formation. Catalyzes the addition of glutamate to the nucleotide precursor UDP-N-acetylmuramoyl-L-alanine (UMA). This is UDP-N-acetylmuramoylalanine--D-glutamate ligase from Burkholderia pseudomallei (strain 668).